The chain runs to 646 residues: Nucleoside triphosphatase I (646 aa).

In terms of domain architecture, Helicase ATP-binding spans 48 to 213 (FIGLKNLNSM…NNLIGLLRPN (166 aa)). An ATP-binding site is contributed by 61–68 (WDTGMGKT). A DEXH box motif is present at residues 151 to 154 (DEVH). The Helicase C-terminal domain maps to 377–540 (YIEACRIILN…KINVVFDLLK (164 aa)). The segment at 466–532 (DIIILDMPWN…DIIKDKQSKI (67 aa)) is binding to the cap-specific mRNA (nucleoside-2'-O-)-methyltransferase.

The protein belongs to the helicase family. NPH I subfamily. As to quaternary structure, monomer. Interacts (via C-terminus) with RAP94 (via N-terminus). Interacts with the cap-specific mRNA (nucleoside-2'-O-)-methyltransferase.

The protein resides in the virion. The enzyme catalyses a ribonucleoside 5'-triphosphate + H2O = a ribonucleoside 5'-diphosphate + phosphate + H(+). Functionally, DNA-dependent ATPase required for providing the needed energy to achieve the termination of early transcripts. Acts in concert with the RAP94 subunit of the virion RNA polymerase and the capping enzyme/VTF to catalyze release of UUUUUNU-containing nascent RNA from the elongation complex. NPH-I must bind ssDNA in order to exhibit ATPase activity. The sequence is that of Nucleoside triphosphatase I (NPH1) from Heliothis armigera entomopoxvirus (HaEPV).